The chain runs to 396 residues: Putative nickel insertion protein (396 aa).

It belongs to the LarC family.

This is Putative nickel insertion protein from Wolinella succinogenes (strain ATCC 29543 / DSM 1740 / CCUG 13145 / JCM 31913 / LMG 7466 / NCTC 11488 / FDC 602W) (Vibrio succinogenes).